Here is a 588-residue protein sequence, read N- to C-terminus: MMGDSHSSFTTTTDEHLYNQFSPGRRKNDFPAASSSSSSPNLRRSPNRTVSSPRVQQKPITIFDQIVDWFQAEISVRKRLAGAACGYLSTIFFIVTVSILKLTIWAPFSSVQDSLAWWIYPNAWASIIFVGIASVAMSLFSIIKFCKVDQLPRLAATDTFALAGVALEFVTRLTFVYTAFCVADFSFSREFAFVAISLAIAISSALVVFRSDYQLNFSHIQVNSVKTLIDFGTSLPYANISEICGIDAAISYTAAVALILVVGPMVSGFSAWWLLLNIPFHVVLFGLCFTQQFYSKISMKIVNQIVMKPISFPFPPPYTVHSPTPEQTRTLPNVIETDDSLLKFFALHDLRTIAWNDEKRRVDVFSLSQPGKHPRNWKAVSLPCVRMLDELCSRMTVSAARLVGYSWDDHDIENEDVPRDALLMPRKMREMAYRGTGQSRQQKSMAPIRSHNTQTVGLLSKISNFLGFGVTEKLVISRFDAHMNAYAAEALYMLVVDSMGEDRFGVVQKDLKDLITLLCKLIAAIDTYERAKASVADKSDVTFLRIVDASLKSSLQRVVTTFGSHLSSLNLPEEHSRTIRMICLTDEL.

Over residues 1–12 the composition is skewed to polar residues; sequence MMGDSHSSFTTT. Residues 1–55 form a disordered region; it reads MMGDSHSSFTTTTDEHLYNQFSPGRRKNDFPAASSSSSSPNLRRSPNRTVSSPRV. Residues 1–79 are Cytoplasmic-facing; the sequence is MMGDSHSSFT…FQAEISVRKR (79 aa). Positions 31-48 are enriched in low complexity; sequence PAASSSSSSPNLRRSPNR. A helical membrane pass occupies residues 80–100; that stretch reads LAGAACGYLSTIFFIVTVSIL. Residues 101-122 lie on the Perinuclear space side of the membrane; that stretch reads KLTIWAPFSSVQDSLAWWIYPN. A helical transmembrane segment spans residues 123 to 143; it reads AWASIIFVGIASVAMSLFSII. Residues 144–159 lie on the Cytoplasmic side of the membrane; it reads KFCKVDQLPRLAATDT. A helical membrane pass occupies residues 160–180; sequence FALAGVALEFVTRLTFVYTAF. Residues 181 to 190 are Perinuclear space-facing; that stretch reads CVADFSFSRE. A helical transmembrane segment spans residues 191–211; sequence FAFVAISLAIAISSALVVFRS. At 212 to 255 the chain is on the cytoplasmic side; that stretch reads DYQLNFSHIQVNSVKTLIDFGTSLPYANISEICGIDAAISYTAA. Residues 256-276 form a helical membrane-spanning segment; that stretch reads VALILVVGPMVSGFSAWWLLL. A topological domain (perinuclear space) is located at residue asparagine 277. A helical transmembrane segment spans residues 278–298; the sequence is IPFHVVLFGLCFTQQFYSKIS. Residues 299 to 588 lie on the Cytoplasmic side of the membrane; the sequence is MKIVNQIVMK…IRMICLTDEL (290 aa).

Belongs to the NDC1 family.

The protein resides in the nucleus. Its subcellular location is the nuclear pore complex. It localises to the nucleus membrane. Its function is as follows. Component of the nuclear pore complex (NPC), which plays a key role in de novo assembly and insertion of NPC in the nuclear envelope. Plays a role in postmitotic nuclear pore complex assembly potentially by promoting localization of nuclear pore complex proteins to the nuclear rim. This chain is Nucleoporin ndc-1, found in Caenorhabditis elegans.